The chain runs to 238 residues: 6-phosphogluconolactonase (238 aa).

Belongs to the glucosamine/galactosamine-6-phosphate isomerase family. 6-phosphogluconolactonase subfamily.

It carries out the reaction 6-phospho-D-glucono-1,5-lactone + H2O = 6-phospho-D-gluconate + H(+). It participates in carbohydrate degradation; pentose phosphate pathway; D-ribulose 5-phosphate from D-glucose 6-phosphate (oxidative stage): step 2/3. In terms of biological role, hydrolysis of 6-phosphogluconolactone to 6-phosphogluconate. This chain is 6-phosphogluconolactonase (pgl), found in Mesorhizobium japonicum (strain LMG 29417 / CECT 9101 / MAFF 303099) (Mesorhizobium loti (strain MAFF 303099)).